The chain runs to 165 residues: Peptide deformylase (165 aa).

2 residues coordinate Fe cation: C88 and H130. E131 is a catalytic residue. H134 provides a ligand contact to Fe cation.

The protein belongs to the polypeptide deformylase family. The cofactor is Fe(2+).

The catalysed reaction is N-terminal N-formyl-L-methionyl-[peptide] + H2O = N-terminal L-methionyl-[peptide] + formate. In terms of biological role, removes the formyl group from the N-terminal Met of newly synthesized proteins. Requires at least a dipeptide for an efficient rate of reaction. N-terminal L-methionine is a prerequisite for activity but the enzyme has broad specificity at other positions. The polypeptide is Peptide deformylase (Borreliella burgdorferi (strain ATCC 35210 / DSM 4680 / CIP 102532 / B31) (Borrelia burgdorferi)).